The primary structure comprises 544 residues: Aspartokinase (544 aa).

The ACT domain occupies Leu463 to Asp535.

The protein belongs to the aspartokinase family.

It catalyses the reaction L-aspartate + ATP = 4-phospho-L-aspartate + ADP. Its pathway is amino-acid biosynthesis; L-methionine biosynthesis via de novo pathway; L-homoserine from L-aspartate: step 1/3. The protein operates within amino-acid biosynthesis; L-threonine biosynthesis; L-threonine from L-aspartate: step 1/5. Functionally, phosphorylates aspartate, the first step in the biosynthesis of amino acids that derive from aspartate (the aspartate family of amino acids), including methioinine and threonine, the latter of which is a precursor to isoleucine. The chain is Aspartokinase from Candida albicans (strain SC5314 / ATCC MYA-2876) (Yeast).